The following is a 175-amino-acid chain: Shikimate kinase (175 aa).

G12–S19 lines the ATP pocket.

The protein belongs to the shikimate kinase family.

The protein localises to the cytoplasm. It carries out the reaction shikimate + ATP = 3-phosphoshikimate + ADP + H(+). The protein operates within metabolic intermediate biosynthesis; chorismate biosynthesis; chorismate from D-erythrose 4-phosphate and phosphoenolpyruvate: step 5/7. The sequence is that of Shikimate kinase from Nitratidesulfovibrio vulgaris (strain ATCC 29579 / DSM 644 / CCUG 34227 / NCIMB 8303 / VKM B-1760 / Hildenborough) (Desulfovibrio vulgaris).